We begin with the raw amino-acid sequence, 140 residues long: uncharacterized protein (140 aa).

A run of 4 helical transmembrane segments spans residues 4–24, 56–76, 84–104, and 109–129; these read LLLA…SFSG, EAFI…YLLW, SAAA…LFFS, and IRDV…YVLA.

Its subcellular location is the cell membrane. May be important for peptidoglycan remodeling. This is an uncharacterized protein from Bacillus subtilis (strain 168).